Here is a 1192-residue protein sequence, read N- to C-terminus: Outer capsid protein VP2 (1192 aa).

Residues Ile-1112–Arg-1192 are disordered. Residues Pro-1140–Thr-1150 show a composition bias toward low complexity. The span at Asn-1159–Gln-1183 shows a compositional bias: polar residues.

The protein resides in the virion. The enzyme catalyses a 5'-end diphospho-ribonucleoside in mRNA + GTP + H(+) = a 5'-end (5'-triphosphoguanosine)-ribonucleoside in mRNA + diphosphate. It catalyses the reaction a 5'-end (5'-triphosphoguanosine)-ribonucleoside in mRNA + S-adenosyl-L-methionine = a 5'-end (N(7)-methyl 5'-triphosphoguanosine)-ribonucleoside in mRNA + S-adenosyl-L-homocysteine. In terms of biological role, outer capsid protein involved in mRNA capping. Catalyzes the last 3 enzymatic activities for formation of the 5' cap structure on the viral plus-strand transcripts, namely the RNA guanylyltransferase, RNA-7N- and RNA-2'O-methyltransferase activities. The protein is Outer capsid protein VP2 (S2) of Rice ragged stunt virus (isolate Thailand) (RRSV).